The chain runs to 151 residues: Putative pre-16S rRNA nuclease (151 aa).

This sequence belongs to the YqgF nuclease family.

It is found in the cytoplasm. Functionally, could be a nuclease involved in processing of the 5'-end of pre-16S rRNA. The protein is Putative pre-16S rRNA nuclease of Neisseria gonorrhoeae (strain ATCC 700825 / FA 1090).